The sequence spans 931 residues: Adhesion G protein-coupled receptor E1 (931 aa).

An N-terminal signal peptide occupies residues 1–27 (MWGFWLLLFWGFSGMYRWGMTTLPTLG). The Extracellular segment spans residues 28 to 644 (QTLGGVNECQ…IMASGELTME (617 aa)). EGF-like domains lie at 32 to 80 (GVNE…VECQ) and 81 to 132 (DVNE…FLCA). Intrachain disulfides connect C36–C48, C42–C57, C59–C79, C85–C98, C92–C107, C109–C131, C137–C149, C143–C158, C160–C171, C177–C189, C183–C198, C200–C220, C226–C239, C233–C248, C250–C270, C276–C286, C280–C295, C297–C317, C323–C336, C330–C345, and C347–C366. Residues 133–172 (DVDECLTIGICPKYSNCSNSVGSYSCTCQPGFVLNGSICE) form the EGF-like 3; calcium-binding domain. N-linked (GlcNAc...) asparagine glycans are attached at residues N148 and N167. An EGF-like 4; calcium-binding domain is found at 173–221 (DEDECVTRDVCPEHATCHNTLGSYYCTCNSGLESSGGGPMFQGLDESCE). Positions 222–271 (DVDECSRNSTLCGPTFICINTLGSYSCSCPAGFSLPTFQILGHPADGNCT) constitute an EGF-like 5; calcium-binding domain. Residue N229 is glycosylated (N-linked (GlcNAc...) asparagine). N-linked (GlcNAc...) asparagine glycans are attached at residues N269 and N283. The EGF-like 6; calcium-binding domain maps to 272-318 (DIDECDDTCPLNSSCTNTIGSYFCTCHPGFASSNGQLNFKDLEVTCE). Residues 319–367 (DIDECTQDPLQCGLNSVCTNVPGSYICGCLPDFQMDPEGSQGYGNFNCK) form the EGF-like 7; calcium-binding domain. Residues N405, N417, N474, and N498 are each glycosylated (N-linked (GlcNAc...) asparagine). The GAIN-B domain occupies 482–642 (EYLDIESKVI…AIIMASGELT (161 aa)). Positions 506–508 (RGD) match the Cell attachment site motif. 2 cysteine pairs are disulfide-bonded: C595-C624 and C612-C626. Residues 595 to 642 (CVSWNTDVEDGRWTPSGCEIVEASETHTVCSCNRMANLAIIMASGELT) are GPS. Residues 645 to 672 (FSLYIISHVGTVISLVCLALAIATFLLC) form a helical membrane-spanning segment. Residues 673-679 (RAVQNHN) are Cytoplasmic-facing. The helical transmembrane segment at 680–701 (TYMHLHLCVCLFLAKILFLTGI) threads the bilayer. Over 702-711 (DKTDNQTACA) the chain is Extracellular. The N-linked (GlcNAc...) asparagine glycan is linked to N706. The chain crosses the membrane as a helical span at residues 712-735 (IIAGFLHYLFLACFFWMLVEAVML). Residues 736-754 (FLMVRNLKVVNYFSSRNIK) lie on the Cytoplasmic side of the membrane. Residues 755–776 (MLHLCAFGYGLPVLVVIISASV) traverse the membrane as a helical segment. The Extracellular segment spans residues 777–792 (QPRGYGMHNRCWLNTE). A helical transmembrane segment spans residues 793-821 (TGFIWSFLGPVCMIITINSVLLAWTLWVL). The Cytoplasmic portion of the chain corresponds to 822–839 (RQKLCSVSSEVSKLKDTR). A helical transmembrane segment spans residues 840–859 (LLTFKAIAQIFILGCSWVLG). Over 860-874 (IFQIGPLASIMAYLF) the chain is Extracellular. Residues 875–897 (TIINSLQGAFIFLIHCLLNRQVR) traverse the membrane as a helical segment. Residues 898–931 (DEYKKLLTRKTDLSSHSQTSGILLSSMPSTSKMG) are Cytoplasmic-facing.

This sequence belongs to the G-protein coupled receptor 2 family. Adhesion G-protein coupled receptor (ADGR) subfamily. As to expression, in macrophages; but absent from those which are localized within T-cell areas of lymph nodes and spleen. Low level of expression on blood monocytes.

It localises to the cell membrane. Functionally, orphan receptor involved in cell adhesion and probably in cell-cell interactions specifically involving cells of the immune system. May play a role in regulatory T-cells (Treg) development. The sequence is that of Adhesion G protein-coupled receptor E1 (Adgre1) from Mus musculus (Mouse).